Here is a 349-residue protein sequence, read N- to C-terminus: uncharacterized protein (349 aa).

A helical transmembrane segment spans residues 221–241 (AFVVWIGSGLNIIWWTGIVLL). Positions 328 to 339 (VASAPPAVPSQP) are enriched in pro residues. The interval 328 to 349 (VASAPPAVPSQPPEYSSVFPPV) is disordered.

It is found in the host membrane. This is an uncharacterized protein from Human cytomegalovirus (strain Merlin) (HHV-5).